The chain runs to 264 residues: Neurexophilin-2 (264 aa).

Residues 1–22 (MRLRPLPLVVVPGLLQLLFCDS) form the signal peptide. Residues 23–90 (KEVVHATEGL…WDWLANITEI (68 aa)) are II. 4 N-linked (GlcNAc...) asparagine glycosylation sites follow: N86, N139, N149, and N155. Residues 91–169 (QEPLARTKRR…LVPPSKVVEF (79 aa)) are III. The tract at residues 170–178 (EVSPQSTLE) is IV (linker domain). The segment at 179–264 (TKESKSFNCR…HSETPYLSSG (86 aa)) is v (Cys-rich).

The protein belongs to the neurexophilin family. In terms of processing, may be proteolytically processed at the boundary between the N-terminal non-conserved and the central conserved domain in neuron-like cells. In terms of tissue distribution, expressed in brain and kidney.

Its subcellular location is the secreted. Its function is as follows. May be signaling molecules that resemble neuropeptides and that act by binding to alpha-neurexins and possibly other receptors. The protein is Neurexophilin-2 (NXPH2) of Homo sapiens (Human).